The chain runs to 247 residues: Uridylate kinase (247 aa).

Position 15–18 (15–18) interacts with ATP; that stretch reads KLSG. The involved in allosteric activation by GTP stretch occupies residues 23–28; it reads GEEGFG. UMP is bound at residue G57. ATP contacts are provided by G58 and R62. Residues D77 and 138 to 145 each bind UMP; that span reads TGNPFFTT. The ATP site is built by T165, Y171, and D174.

The protein belongs to the UMP kinase family. Homohexamer.

It is found in the cytoplasm. It catalyses the reaction UMP + ATP = UDP + ADP. The protein operates within pyrimidine metabolism; CTP biosynthesis via de novo pathway; UDP from UMP (UMPK route): step 1/1. Its activity is regulated as follows. Allosterically activated by GTP. Inhibited by UTP. Functionally, catalyzes the reversible phosphorylation of UMP to UDP. The polypeptide is Uridylate kinase (Pseudoalteromonas atlantica (strain T6c / ATCC BAA-1087)).